A 481-amino-acid chain; its full sequence is Glutamyl-tRNA(Gln) amidotransferase subunit A (481 aa).

Catalysis depends on charge relay system residues Lys-74 and Ser-149. The Acyl-ester intermediate role is filled by Ser-173.

Belongs to the amidase family. GatA subfamily. As to quaternary structure, heterotrimer of A, B and C subunits.

The enzyme catalyses L-glutamyl-tRNA(Gln) + L-glutamine + ATP + H2O = L-glutaminyl-tRNA(Gln) + L-glutamate + ADP + phosphate + H(+). Allows the formation of correctly charged Gln-tRNA(Gln) through the transamidation of misacylated Glu-tRNA(Gln) in organisms which lack glutaminyl-tRNA synthetase. The reaction takes place in the presence of glutamine and ATP through an activated gamma-phospho-Glu-tRNA(Gln). The sequence is that of Glutamyl-tRNA(Gln) amidotransferase subunit A from Francisella tularensis subsp. tularensis (strain WY96-3418).